Here is a 187-residue protein sequence, read N- to C-terminus: TATA-box-binding protein (187 aa).

Tandem repeats lie at residues 10–86 (IENV…FDKL) and 101–179 (VQNI…VSRL).

This sequence belongs to the TBP family.

Its function is as follows. General factor that plays a role in the activation of archaeal genes transcribed by RNA polymerase. Binds specifically to the TATA box promoter element which lies close to the position of transcription initiation. In Natronomonas pharaonis (strain ATCC 35678 / DSM 2160 / CIP 103997 / JCM 8858 / NBRC 14720 / NCIMB 2260 / Gabara) (Halobacterium pharaonis), this protein is TATA-box-binding protein.